A 231-amino-acid chain; its full sequence is GrpE protein homolog, mitochondrial (231 aa).

The segment at 49-71 is disordered; the sequence is SEKAGEKAEEKAEEQNLSAEEQK.

This sequence belongs to the GrpE family. Component of the PAM complex, at least composed of mtHsp70, MGE1, TIM44, PAM16, PAM17 and PAM18.

The protein localises to the mitochondrion matrix. Its function is as follows. Essential component of the PAM complex, a complex required for the translocation of transit peptide-containing proteins from the inner membrane into the mitochondrial matrix in an ATP-dependent manner. Seems to control the nucleotide-dependent binding of SSC1 to substrate proteins. This chain is GrpE protein homolog, mitochondrial (mge1), found in Candida glabrata (strain ATCC 2001 / BCRC 20586 / JCM 3761 / NBRC 0622 / NRRL Y-65 / CBS 138) (Yeast).